The sequence spans 457 residues: PE-PGRS family protein PE_PGRS18 (457 aa).

Residues 1–92 enclose the PE domain; it reads MSFVNVAPQL…SSTYAVAEAA (92 aa). 4 NHL repeats span residues 291–321, 333–363, 379–404, and 419–447; these read FNDP…IDPV, NGPS…IDPN, GVAV…IDPA, and PTGV…ITGE.

The protein belongs to the mycobacterial PE family. PGRS subfamily.

The protein localises to the secreted. It localises to the cell wall. In terms of biological role, enhances mycobacterial intracellular survival, probably via altering host macrophage cytokine profiling and attenuating the cell apoptosis. Could be required for host endothelial-cell invasion. Its function is as follows. Expression in Mycobacterium smegmatis, a nonpathogenic species naturally deficient in PE_PGRS genes, results in alteration of the production of host cytokines, including IL-6, IL-1beta, IL-10 and IL-12p40, as well as enhanced survival within macrophages largely via attenuating the apoptosis of macrophages. The sequence is that of PE-PGRS family protein PE_PGRS18 from Mycobacterium tuberculosis (strain ATCC 25618 / H37Rv).